The primary structure comprises 314 residues: Prohormone-3 (314 aa).

A signal peptide spans 1 to 19 (MGRVLLSASSLLLHIQVFT). The chain crosses the membrane as a helical span at residues 90–112 (YTCVALTVVALVSTMHFGVEAWG).

The protein resides in the membrane. The chain is Prohormone-3 from Apis mellifera (Honeybee).